The sequence spans 53 residues: Large ribosomal subunit protein bL32c (53 aa).

Positions 1–21 are disordered; sequence MAVPKKRTSKSKKKSRRSHWI.

This sequence belongs to the bacterial ribosomal protein bL32 family.

The protein localises to the plastid. Its subcellular location is the chloroplast. This Cyanidium caldarium (Red alga) protein is Large ribosomal subunit protein bL32c (rpl32).